A 105-amino-acid chain; its full sequence is Heat shock protein HspQ (105 aa).

The segment at 75-105 is disordered; the sequence is GEAQEAHPEQPSLDELAESIRHQLQAPRLRN.

The protein belongs to the HspQ family.

It localises to the cytoplasm. Involved in the degradation of certain denaturated proteins, including DnaA, during heat shock stress. The sequence is that of Heat shock protein HspQ from Serratia proteamaculans (strain 568).